A 160-amino-acid polypeptide reads, in one-letter code: Eosinophil cationic protein (160 aa).

An N-terminal signal peptide occupies residues 1 to 27; the sequence is MVPKLFTPQICLLLLLGLMGVEGSLHA. The interval 28–72 is required for nearly all of the bactericidal activities; partially involved in LPS-binding; sequence RPPQFTKAQWFAIQHINVNPPRCTIAMRVINNYQRRCKNQNTFLR. The Proton acceptor role is filled by H42. Disulfide bonds link C50–C110, C64–C123, C82–C138, and C89–C98. At Y60 the chain carries 3'-nitrotyrosine. 65 to 69 serves as a coordination point for substrate; that stretch reads KNQNT. N-linked (GlcNAc...) asparagine glycans are attached at residues N84, N92, and N119. H155 functions as the Proton donor in the catalytic mechanism.

It belongs to the pancreatic ribonuclease family. As to quaternary structure, interacts with bacterial lipopolysaccharide (LPS) and lipoteichoic acid (LTA). In vitro interacts with phospholipid bilayers.

It localises to the secreted. In terms of biological role, cytotoxin and helminthotoxin with low-efficiency ribonuclease activity. Possesses a wide variety of biological activities. Exhibits antibacterial activity. The polypeptide is Eosinophil cationic protein (RNASE3) (Macaca nemestrina (Pig-tailed macaque)).